Consider the following 209-residue polypeptide: Cytidylate kinase (209 aa).

9–17 (GPAAAGKGT) contacts ATP.

The protein belongs to the cytidylate kinase family. Type 1 subfamily.

The protein localises to the cytoplasm. The enzyme catalyses CMP + ATP = CDP + ADP. It carries out the reaction dCMP + ATP = dCDP + ADP. The chain is Cytidylate kinase from Granulibacter bethesdensis (strain ATCC BAA-1260 / CGDNIH1).